An 891-amino-acid chain; its full sequence is MILLNMNLQEFKQKYNYDVATKMMQQYLDIKFAHLDCLLLFRMGDFYEMFYEDATIASKVLGIALTKRGKNGEEEIPMCGIPYHALENYLTKLIKENHKIAICDQLETPEEAKNKGGYKAVVSRDVTRIITPGTIIEENFIASDEPNYLASLVIPQNKETASLCYVDLSTSEIFVVNVPEAEILNELARLKPREILLSENLRSSNLADNIFKQLNFRITYQVDSFFAVNKCEKIILDFYKMKDIKGIGEISSGQICTIGSILEYLSLTQKQNIPHLPIPRIINFHSYMAIDVATRRNLEIVTNSQGGSKGSVLSTINHTVTKQGGRLLYNFLSSPLTDITKINQRLNITDFFYSNPAIVSKIREYLKRISDIERCLTRITMNRSSGHDLLSIKYTLETATIIKGVFFDVYGVNLPDFIEKIIKPLTGNEELYNLIEATIREDAPHNLNEGGIIKHEYHPKVAQLHDLINNGKLHIEKLRDQYRKETGIDSLKICHNNVIGLFIDITAKNANKITDPKFIHRQTTVNSVRYTTNELQKLESNLVNAKTLVISLEKALYADICRQVIVKSSYLRMLAISLSRLDVFCNFAYVADEYDYVKPEFTNDLSFNIVKGRHPVVEKALQRESKSFVYNDCRLSEFERIWLITGPNMAGKSTFLRQNAIIAIMAQIGSFVPAKSAKIGVVDKIFSRIGAADDLIKGQSTFMAEMLETSAILAQSTKNSLIILDEVGRGTSTYDGVSIAWSVLEYIHDKLKCRCLFATHYHELTFMSNFLPALQNYTIAIEELGKDILFLHNIISGAADRSYGIHVAALAGLPASVINRAEQILLKFEKTSTIKGKNILSTESNNFSLFNLKPNKTTISNKLYAKFRTIDPDKLSPKEALELIYELKKMV.

646-653 contributes to the ATP binding site; that stretch reads GPNMAGKS.

Belongs to the DNA mismatch repair MutS family.

Functionally, this protein is involved in the repair of mismatches in DNA. It is possible that it carries out the mismatch recognition step. This protein has a weak ATPase activity. The protein is DNA mismatch repair protein MutS of Rickettsia canadensis (strain McKiel).